The following is a 357-amino-acid chain: Homoserine kinase (357 aa).

The protein belongs to the GHMP kinase family. Homoserine kinase subfamily.

It catalyses the reaction L-homoserine + ATP = O-phospho-L-homoserine + ADP + H(+). Its pathway is amino-acid biosynthesis; L-threonine biosynthesis; L-threonine from L-aspartate: step 4/5. Its function is as follows. Commits homoserine to the threonine biosynthesis pathway by catalyzing its O-phosphorylation. The polypeptide is Homoserine kinase (Cryptococcus neoformans var. grubii serotype A (strain H99 / ATCC 208821 / CBS 10515 / FGSC 9487) (Filobasidiella neoformans var. grubii)).